We begin with the raw amino-acid sequence, 210 residues long: tRNA (guanine-N(7)-)-methyltransferase (210 aa).

4 residues coordinate S-adenosyl-L-methionine: Glu36, Glu61, Asp90, and Asp112. Asp112 is a catalytic residue. Substrate is bound by residues Lys116, Asp148, and 188–191; that span reads TEYE.

This sequence belongs to the class I-like SAM-binding methyltransferase superfamily. TrmB family.

The enzyme catalyses guanosine(46) in tRNA + S-adenosyl-L-methionine = N(7)-methylguanosine(46) in tRNA + S-adenosyl-L-homocysteine. It participates in tRNA modification; N(7)-methylguanine-tRNA biosynthesis. Its function is as follows. Catalyzes the formation of N(7)-methylguanine at position 46 (m7G46) in tRNA. This is tRNA (guanine-N(7)-)-methyltransferase from Mycoplasma pneumoniae (strain ATCC 29342 / M129 / Subtype 1) (Mycoplasmoides pneumoniae).